An 861-amino-acid polypeptide reads, in one-letter code: Bifunctional uridylyltransferase/uridylyl-removing enzyme (861 aa).

The segment at 1–322 (MHTAAAATPA…FPTELGITRT (322 aa)) is uridylyltransferase. The segment at 323 to 679 (INGRFVERQG…ARISPVGEGL (357 aa)) is uridylyl-removing. The HD domain occupies 441-557 (VDQHILMVVR…RHFADQVGSE (117 aa)). 2 ACT domains span residues 680 to 763 (QVAV…AEPP) and 792 to 861 (LLSL…ALAI).

It belongs to the GlnD family. Mg(2+) is required as a cofactor.

It carries out the reaction [protein-PII]-L-tyrosine + UTP = [protein-PII]-uridylyl-L-tyrosine + diphosphate. It catalyses the reaction [protein-PII]-uridylyl-L-tyrosine + H2O = [protein-PII]-L-tyrosine + UMP + H(+). Its activity is regulated as follows. Uridylyltransferase (UTase) activity is inhibited by glutamine, while glutamine activates uridylyl-removing (UR) activity. Functionally, modifies, by uridylylation and deuridylylation, the PII regulatory proteins (GlnB and homologs), in response to the nitrogen status of the cell that GlnD senses through the glutamine level. Under low glutamine levels, catalyzes the conversion of the PII proteins and UTP to PII-UMP and PPi, while under higher glutamine levels, GlnD hydrolyzes PII-UMP to PII and UMP (deuridylylation). Thus, controls uridylylation state and activity of the PII proteins, and plays an important role in the regulation of nitrogen assimilation and metabolism. The chain is Bifunctional uridylyltransferase/uridylyl-removing enzyme from Ralstonia nicotianae (strain ATCC BAA-1114 / GMI1000) (Ralstonia solanacearum).